The primary structure comprises 277 residues: MAVKGFRPTTPTRREMTMCTFEEITTSTPEKSLLVSLKKSGGRNANGKITVRHIGGGAKRKYRIIDFKRNKDNIPAKVVSIEYDPNRTAFIALVVYADGEKRYIIAPVGLKVGDTVVSGPESDIKVGNCLPIRNIPVGTVIHNIELAAGKGAQLVRSAGNSAQLMAKEGDYSQVRLPSGEVRYIRVECRATIGVVSNQTNEIVNIGKAGRKRHMGVRPTVRGSVMNPNDHPHGGGEGRSPIGHPSPRTPWGKPALGYKTRKNKKYSDRFIVKRRHDK.

The interval 219–277 (TVRGSVMNPNDHPHGGGEGRSPIGHPSPRTPWGKPALGYKTRKNKKYSDRFIVKRRHDK) is disordered.

Belongs to the universal ribosomal protein uL2 family. Part of the 50S ribosomal subunit. Forms a bridge to the 30S subunit in the 70S ribosome.

In terms of biological role, one of the primary rRNA binding proteins. Required for association of the 30S and 50S subunits to form the 70S ribosome, for tRNA binding and peptide bond formation. It has been suggested to have peptidyltransferase activity; this is somewhat controversial. Makes several contacts with the 16S rRNA in the 70S ribosome. The chain is Large ribosomal subunit protein uL2 from Clostridium botulinum (strain 657 / Type Ba4).